A 351-amino-acid chain; its full sequence is L-threonine 3-dehydrogenase (351 aa).

Residue Cys-39 participates in Zn(2+) binding. Residues Thr-41 and His-44 each act as charge relay system in the active site. Zn(2+) contacts are provided by His-64, Glu-65, Cys-94, Cys-97, Cys-100, and Cys-108. NAD(+) is bound by residues Ile-176, Asp-196, Arg-201, 271–273, and 295–296; these read LGI and IY.

This sequence belongs to the zinc-containing alcohol dehydrogenase family. As to quaternary structure, homotetramer. It depends on Zn(2+) as a cofactor.

Its subcellular location is the cytoplasm. It carries out the reaction L-threonine + NAD(+) = (2S)-2-amino-3-oxobutanoate + NADH + H(+). It participates in amino-acid degradation; L-threonine degradation via oxydo-reductase pathway; glycine from L-threonine: step 1/2. Its function is as follows. Catalyzes the NAD(+)-dependent oxidation of L-threonine to 2-amino-3-ketobutyrate. The protein is L-threonine 3-dehydrogenase of Francisella philomiragia subsp. philomiragia (strain ATCC 25017 / CCUG 19701 / FSC 153 / O#319-036).